A 499-amino-acid polypeptide reads, in one-letter code: UDP-N-acetylmuramoylalanine--D-glutamate ligase (499 aa).

129 to 135 (GTNGKTT) lines the ATP pocket.

Belongs to the MurCDEF family.

It localises to the cytoplasm. It catalyses the reaction UDP-N-acetyl-alpha-D-muramoyl-L-alanine + D-glutamate + ATP = UDP-N-acetyl-alpha-D-muramoyl-L-alanyl-D-glutamate + ADP + phosphate + H(+). It functions in the pathway cell wall biogenesis; peptidoglycan biosynthesis. Functionally, cell wall formation. Catalyzes the addition of glutamate to the nucleotide precursor UDP-N-acetylmuramoyl-L-alanine (UMA). The sequence is that of UDP-N-acetylmuramoylalanine--D-glutamate ligase from Ralstonia nicotianae (strain ATCC BAA-1114 / GMI1000) (Ralstonia solanacearum).